We begin with the raw amino-acid sequence, 178 residues long: Probable chorismate pyruvate-lyase (178 aa).

Substrate contacts are provided by arginine 72, leucine 110, and glutamate 169.

Belongs to the UbiC family.

It is found in the cytoplasm. The enzyme catalyses chorismate = 4-hydroxybenzoate + pyruvate. Its pathway is cofactor biosynthesis; ubiquinone biosynthesis. In terms of biological role, removes the pyruvyl group from chorismate, with concomitant aromatization of the ring, to provide 4-hydroxybenzoate (4HB) for the ubiquinone pathway. The chain is Probable chorismate pyruvate-lyase from Nitrosomonas eutropha (strain DSM 101675 / C91 / Nm57).